Reading from the N-terminus, the 246-residue chain is Triosephosphate isomerase (246 aa).

Substrate is bound at residue 9–11 (NWK). H99 serves as the catalytic Electrophile. The active-site Proton acceptor is the E168. Residues G174, S207, and 228–229 (GG) each bind substrate.

The protein belongs to the triosephosphate isomerase family. As to quaternary structure, homodimer.

The protein localises to the cytoplasm. It catalyses the reaction D-glyceraldehyde 3-phosphate = dihydroxyacetone phosphate. The protein operates within carbohydrate biosynthesis; gluconeogenesis. Its pathway is carbohydrate degradation; glycolysis; D-glyceraldehyde 3-phosphate from glycerone phosphate: step 1/1. Its function is as follows. Involved in the gluconeogenesis. Catalyzes stereospecifically the conversion of dihydroxyacetone phosphate (DHAP) to D-glyceraldehyde-3-phosphate (G3P). This is Triosephosphate isomerase from Prochlorococcus marinus (strain NATL1A).